A 582-amino-acid chain; its full sequence is Aspartate--tRNA ligase (582 aa).

Glutamate 174 serves as a coordination point for L-aspartate. Positions 198–201 (QITK) are aspartate. Arginine 220 is a binding site for L-aspartate. Residues 220-222 (RDE) and glutamine 229 each bind ATP. Histidine 443 is a binding site for L-aspartate. Glutamate 477 is a binding site for ATP. Arginine 484 contacts L-aspartate. 529 to 532 (GLDR) provides a ligand contact to ATP.

The protein belongs to the class-II aminoacyl-tRNA synthetase family. Type 1 subfamily. In terms of assembly, homodimer.

Its subcellular location is the cytoplasm. The enzyme catalyses tRNA(Asp) + L-aspartate + ATP = L-aspartyl-tRNA(Asp) + AMP + diphosphate. Catalyzes the attachment of L-aspartate to tRNA(Asp) in a two-step reaction: L-aspartate is first activated by ATP to form Asp-AMP and then transferred to the acceptor end of tRNA(Asp). This is Aspartate--tRNA ligase from Streptococcus pyogenes serotype M3 (strain ATCC BAA-595 / MGAS315).